A 362-amino-acid chain; its full sequence is Ferrochelatase (362 aa).

The Fe cation site is built by His228 and Glu309.

The protein belongs to the ferrochelatase family.

The protein resides in the cytoplasm. It catalyses the reaction heme b + 2 H(+) = protoporphyrin IX + Fe(2+). It functions in the pathway porphyrin-containing compound metabolism; protoheme biosynthesis; protoheme from protoporphyrin-IX: step 1/1. Catalyzes the ferrous insertion into protoporphyrin IX. The chain is Ferrochelatase from Bordetella parapertussis (strain 12822 / ATCC BAA-587 / NCTC 13253).